A 264-amino-acid chain; its full sequence is PDZ domain-containing protein 9 (264 aa).

The PDZ domain maps to 22-109; that stretch reads VHNLSKTQQT…GTVLQIKVYR (88 aa).

In Macaca fascicularis (Crab-eating macaque), this protein is PDZ domain-containing protein 9 (PDZD9).